The following is a 332-amino-acid chain: 5-dehydro-2-deoxygluconokinase 1 (332 aa).

The protein belongs to the carbohydrate kinase PfkB family.

The enzyme catalyses 5-dehydro-2-deoxy-D-gluconate + ATP = 6-phospho-5-dehydro-2-deoxy-D-gluconate + ADP + H(+). Its pathway is polyol metabolism; myo-inositol degradation into acetyl-CoA; acetyl-CoA from myo-inositol: step 5/7. Its function is as follows. Catalyzes the phosphorylation of 5-dehydro-2-deoxy-D-gluconate (2-deoxy-5-keto-D-gluconate or DKG) to 6-phospho-5-dehydro-2-deoxy-D-gluconate (DKGP). This Bacillus cereus (strain ZK / E33L) protein is 5-dehydro-2-deoxygluconokinase 1.